Here is a 308-residue protein sequence, read N- to C-terminus: Atrochrysone carboxyl ACP thioesterase (308 aa).

Residues His-99, His-101, Asp-103, and His-104 each contribute to the Zn(2+) site. Residue Asp-103 is the Proton donor/acceptor of the active site.

Belongs to the metallo-beta-lactamase superfamily. It depends on Zn(2+) as a cofactor.

The catalysed reaction is atrochrysone carboxyl-[ACP] + H2O = atrochrysone carboxylate + holo-[ACP] + H(+). The protein operates within secondary metabolite biosynthesis. Its function is as follows. Atrochrysone carboxyl ACP thioesterase; part of the gene cluster that mediates the biosynthesis of physcion, a natural anthraquinone fungicide that can prevent plant fungal infections. The pathway begins with the polyketide synthase AcPKS that condenses 8 malonyl-CoA units to synthesize atrochrysone thioester which is released from the synthase by the atrochrysone carboxyl ACP thioesterase AcTE that breaks the thioester bond and leads to free atrochrysone carboxylic acid. Spontaneous decarboxylation of atrochrysone carboxylic acid leads to the formation of atrochrysone. Then, atrochrysone undergoes spontaneous dehydration and oxidation, giving the products emodin anthrone and emodin. The O-methyltransferase AcOMT then methylates the C-6 hydroxyl of emodin to form physcion. This Aspergillus chevalieri (Eurotium chevalieri) protein is Atrochrysone carboxyl ACP thioesterase.